Consider the following 165-residue polypeptide: Cyclic pyranopterin monophosphate synthase (165 aa).

Substrate is bound by residues 83-85 and 120-121; these read FCH and ME. Aspartate 135 is an active-site residue.

This sequence belongs to the MoaC family. Homohexamer; trimer of dimers.

It catalyses the reaction (8S)-3',8-cyclo-7,8-dihydroguanosine 5'-triphosphate = cyclic pyranopterin phosphate + diphosphate. It functions in the pathway cofactor biosynthesis; molybdopterin biosynthesis. In terms of biological role, catalyzes the conversion of (8S)-3',8-cyclo-7,8-dihydroguanosine 5'-triphosphate to cyclic pyranopterin monophosphate (cPMP). In Xanthomonas axonopodis pv. citri (strain 306), this protein is Cyclic pyranopterin monophosphate synthase.